The chain runs to 233 residues: MIDQKVIVALDYDNQADALAFVDRIDPASCRLKVGKEMFTLFGPDFVRELHKRGFSVFLDLKFHDIPNTCSKAVRAAAELGVWMVNVHASGGERMMTASREILEPYGKDRPLLIGVTVLTSMEQSDLAGIGLDVAPQEQVIRLATLTKNSGLDGVVCSAQESSLLKNELGKEFKLVTPGIRPAGSEQGDQRRIMTPVDAIQAGSDYLVIGRPITQAADPASVLKSINDSLASM.

Residues Asp-11, Lys-33, 60 to 69 (DLKFHDIPNT), Thr-120, Arg-181, Gln-190, Gly-210, and Arg-211 each bind substrate. The Proton donor role is filled by Lys-62.

It belongs to the OMP decarboxylase family. Type 1 subfamily. In terms of assembly, homodimer.

It catalyses the reaction orotidine 5'-phosphate + H(+) = UMP + CO2. It participates in pyrimidine metabolism; UMP biosynthesis via de novo pathway; UMP from orotate: step 2/2. Its function is as follows. Catalyzes the decarboxylation of orotidine 5'-monophosphate (OMP) to uridine 5'-monophosphate (UMP). In Vibrio campbellii (strain ATCC BAA-1116), this protein is Orotidine 5'-phosphate decarboxylase.